The chain runs to 313 residues: Acetyl-coenzyme A carboxylase carboxyl transferase subunit alpha (313 aa).

Residues 36 to 286 (RLDKEVKTIY…KEYFLDTLRT (251 aa)) enclose the CoA carboxyltransferase C-terminal domain.

It belongs to the AccA family. Acetyl-CoA carboxylase is a heterohexamer composed of biotin carboxyl carrier protein (AccB), biotin carboxylase (AccC) and two subunits each of ACCase subunit alpha (AccA) and ACCase subunit beta (AccD).

The protein resides in the cytoplasm. The enzyme catalyses N(6)-carboxybiotinyl-L-lysyl-[protein] + acetyl-CoA = N(6)-biotinyl-L-lysyl-[protein] + malonyl-CoA. It participates in lipid metabolism; malonyl-CoA biosynthesis; malonyl-CoA from acetyl-CoA: step 1/1. Component of the acetyl coenzyme A carboxylase (ACC) complex. First, biotin carboxylase catalyzes the carboxylation of biotin on its carrier protein (BCCP) and then the CO(2) group is transferred by the carboxyltransferase to acetyl-CoA to form malonyl-CoA. This is Acetyl-coenzyme A carboxylase carboxyl transferase subunit alpha from Helicobacter acinonychis (strain Sheeba).